Consider the following 316-residue polypeptide: Retinol dehydrogenase 12 (316 aa).

Residue 46 to 52 (GANTGIG) participates in NADP(+) binding. Residue serine 175 coordinates substrate. Residue tyrosine 200 is the Proton acceptor of the active site.

Belongs to the short-chain dehydrogenases/reductases (SDR) family. As to expression, expressed in the inner segments of the photoreceptor in retina.

The catalysed reaction is all-trans-retinol + NADP(+) = all-trans-retinal + NADPH + H(+). It catalyses the reaction 11-cis-retinol + NADP(+) = 11-cis-retinal + NADPH + H(+). The enzyme catalyses 9-cis-retinol + NADP(+) = 9-cis-retinal + NADPH + H(+). It carries out the reaction a 4-hydroxynonen-1-ol + NADP(+) = a 4-hydroxynonenal + NADPH + H(+). The catalysed reaction is (E)-non-2-en-1-ol + NADP(+) = (E)-non-2-enal + NADPH + H(+). It catalyses the reaction (Z)-non-6-en-1-ol + NADP(+) = (Z)-non-6-enal + NADPH + H(+). The enzyme catalyses nonan-1-ol + NADP(+) = nonanal + NADPH + H(+). The protein operates within cofactor metabolism; retinol metabolism. In terms of biological role, retinoids dehydrogenase/reductase with a clear preference for NADP. Displays high activity towards 9-cis, 11-cis and all-trans-retinal. Shows very weak activity toward 13-cis-retinol. Also exhibits activity, albeit with lower affinity than for retinaldehydes, towards lipid peroxidation products (C9 aldehydes) such as 4-hydroxynonenal and trans-2-nonenal. Plays an important function in photoreceptor cells to detoxify 4-hydroxynonenal and potentially other toxic aldehyde products resulting from lipid peroxidation. Has no dehydrogenase activity towards steroids. The polypeptide is Retinol dehydrogenase 12 (Rdh12) (Mus musculus (Mouse)).